The chain runs to 2205 residues: Kinesin-related protein 1 (2205 aa).

Residues 2–355 (NVQVAVRVRP…LRYADSAKKI (354 aa)) enclose the Kinesin motor domain. 102–109 (GQTGSGKS) is an ATP binding site. Residues 362–448 (NEDAQSKLIR…EDRMAALKDM (87 aa)) adopt a coiled-coil conformation. Residues 483-595 (TRIGRSDSEI…LTTGNRVILG (113 aa)) enclose the FHA domain. Low complexity predominate over residues 525–548 (FMNNNNNKENSSSTTPTSSKSPSK). 4 disordered regions span residues 525 to 568 (FMNN…EKKL), 971 to 993 (SKQQ…SSKN), 1084 to 1226 (DNPL…TNSA), and 1455 to 1508 (THQQ…STIV). Residues 549 to 568 (PKSEKEKENNNDDDDGEKKL) are compositionally biased toward basic and acidic residues. Composition is skewed to low complexity over residues 978–991 (TSSS…SSSS), 1089–1103 (SSSA…PNNS), and 1117–1142 (TPYS…QGTP). The segment covering 1143 to 1164 (YNPQSNNPNVISNAPPTPNSNL) has biased composition (polar residues). Low complexity-rich tracts occupy residues 1169–1226 (SLAA…TNSA) and 1455–1492 (THQQ…TSSS). In terms of domain architecture, PH spans 1523–1616 (EDETSGYLKK…WVQTLDPLRK (94 aa)). Coiled-coil stretches lie at residues 1879 to 1918 (KDES…ETSA), 1946 to 2034 (SAQV…NGMA), and 2075 to 2149 (AHQS…KKKY).

This sequence belongs to the TRAFAC class myosin-kinesin ATPase superfamily. Kinesin family. Unc-104 subfamily. As to quaternary structure, homodimer.

It localises to the cytoplasm. The protein localises to the cytoskeleton. The protein resides in the cytoplasmic vesicle membrane. Microtubule-associated force-producing protein that plays a role in organelle transport. Its motor activity is directed toward the microtubule's plus end. Transports cytoplasmic vesicles and particularly phosphatidylinositol 4,5-bisphosphate-containing liposomes along microtubules. This chain is Kinesin-related protein 1 (kif1), found in Dictyostelium discoideum (Social amoeba).